The sequence spans 163 residues: Nucleotide-binding protein ECA1137 (163 aa).

The protein belongs to the YajQ family.

Its function is as follows. Nucleotide-binding protein. In Pectobacterium atrosepticum (strain SCRI 1043 / ATCC BAA-672) (Erwinia carotovora subsp. atroseptica), this protein is Nucleotide-binding protein ECA1137.